Reading from the N-terminus, the 156-residue chain is Transcription antitermination protein NusB (156 aa).

The protein belongs to the NusB family.

Functionally, involved in transcription antitermination. Required for transcription of ribosomal RNA (rRNA) genes. Binds specifically to the boxA antiterminator sequence of the ribosomal RNA (rrn) operons. This chain is Transcription antitermination protein NusB, found in Rickettsia felis (strain ATCC VR-1525 / URRWXCal2) (Rickettsia azadi).